The primary structure comprises 293 residues: Mitochondrial inner membrane protease atp23 (293 aa).

The interval 1-51 is disordered; sequence MSPAPTTSAGPASSGIPPSSLPTSTVTEDDTKPSSSSSKANDLLPRYLTND. A compositionally biased stretch (low complexity) spans 8-22; it reads SAGPASSGIPPSSLP. Position 190 (His-190) interacts with a divalent metal cation. Residue Glu-191 is part of the active site. His-194 contributes to the a divalent metal cation binding site.

This sequence belongs to the peptidase M76 family.

It is found in the mitochondrion inner membrane. Functionally, has a dual role in the assembly of mitochondrial ATPase. Acts as a protease that removes N-terminal residues of mitochondrial ATPase CF(0) subunit 6 at the intermembrane space side. Also involved in the correct assembly of the membrane-embedded ATPase CF(0) particle, probably mediating association of subunit 6 with the subunit 9 ring. The sequence is that of Mitochondrial inner membrane protease atp23 (atp23) from Neurospora crassa (strain ATCC 24698 / 74-OR23-1A / CBS 708.71 / DSM 1257 / FGSC 987).